Here is a 1219-residue protein sequence, read N- to C-terminus: Type IV pilus biogenesis factor PilY1 homolog PD_0502 (1219 aa).

The N-terminal stretch at 1–35 (MVGMSRIILNNLFFFRCVVAVFSAHSLVISGAVHA) is a signal peptide. Residues 212–234 (GLSTDPLNTEGQPYDPSRHPLNS) are disordered. Residues Q958, N960, I962, and D964 each coordinate Ca(2+).

This sequence belongs to the PilY1 family.

Its subcellular location is the fimbrium. One of the three PilY1 homologs of X.fastidiosa, which are involved in bacterial twitching motility as component of the filamentous type IV pili (T4P). The polypeptide is Type IV pilus biogenesis factor PilY1 homolog PD_0502 (Xylella fastidiosa (strain Temecula1 / ATCC 700964)).